Reading from the N-terminus, the 707-residue chain is Transcription termination factor Rho (707 aa).

Disordered stretches follow at residues 1-38 (MSDT…RRGT) and 76-321 (QAAG…DEIQ). 2 stretches are compositionally biased toward low complexity: residues 16–31 (AAAP…TGAG) and 76–93 (QAAG…ADTA). Residues 107–132 (RTGDEAPAEKAEKAGKADKKADKAAA) show a composition bias toward basic and acidic residues. Residues 153–163 (ASAEQAAPADD) show a composition bias toward low complexity. A compositionally biased stretch (polar residues) spans 176-188 (DAGSPSATDTTVA). The span at 203–213 (QQSQGHQQGQG) shows a compositional bias: low complexity. The span at 215–265 (ARSDAEGGDGRRRDRRDRGDRDRGDRGDRGDRGDRGDRGERGRDRRNKGDD) shows a compositional bias: basic and acidic residues. Residues 301 to 315 (RRGRRGRYRDRRGRR) show a composition bias toward basic residues. In terms of domain architecture, Rho RNA-BD spans 331–406 (LIPVAGILDI…VRLDSVNGMA (76 aa)). ATP-binding positions include 449 to 454 (GKGQRG), 461 to 466 (KTGKTM), and Arg492.

The protein belongs to the Rho family. As to quaternary structure, homohexamer. The homohexamer assembles into an open ring structure.

Its function is as follows. Facilitates transcription termination by a mechanism that involves Rho binding to the nascent RNA, activation of Rho's RNA-dependent ATPase activity, and release of the mRNA from the DNA template. This is Transcription termination factor Rho from Streptomyces lividans.